The following is a 540-amino-acid chain: 2-isopropylmalate synthase (540 aa).

Positions 8–269 (VLIFDTTLRD…YFNPFFGREP (262 aa)) constitute a Pyruvate carboxyltransferase domain. Mn(2+) contacts are provided by Asp17, His208, His210, and Asn244. The segment at 408 to 540 (QLRLVQVSCG…AVLADLRSGI (133 aa)) is regulatory domain.

It belongs to the alpha-IPM synthase/homocitrate synthase family. LeuA type 1 subfamily. As to quaternary structure, homodimer. The cofactor is Mn(2+).

Its subcellular location is the cytoplasm. The enzyme catalyses 3-methyl-2-oxobutanoate + acetyl-CoA + H2O = (2S)-2-isopropylmalate + CoA + H(+). It participates in amino-acid biosynthesis; L-leucine biosynthesis; L-leucine from 3-methyl-2-oxobutanoate: step 1/4. Its function is as follows. Catalyzes the condensation of the acetyl group of acetyl-CoA with 3-methyl-2-oxobutanoate (2-ketoisovalerate) to form 3-carboxy-3-hydroxy-4-methylpentanoate (2-isopropylmalate). This chain is 2-isopropylmalate synthase, found in Prochlorococcus marinus (strain MIT 9313).